A 132-amino-acid chain; its full sequence is Ribosome-binding factor A (132 aa).

This sequence belongs to the RbfA family. In terms of assembly, monomer. Binds 30S ribosomal subunits, but not 50S ribosomal subunits or 70S ribosomes.

It is found in the cytoplasm. In terms of biological role, one of several proteins that assist in the late maturation steps of the functional core of the 30S ribosomal subunit. Associates with free 30S ribosomal subunits (but not with 30S subunits that are part of 70S ribosomes or polysomes). Required for efficient processing of 16S rRNA. May interact with the 5'-terminal helix region of 16S rRNA. This chain is Ribosome-binding factor A, found in Burkholderia cenocepacia (strain ATCC BAA-245 / DSM 16553 / LMG 16656 / NCTC 13227 / J2315 / CF5610) (Burkholderia cepacia (strain J2315)).